The following is a 129-amino-acid chain: Glycine cleavage system H protein (129 aa).

The 83-residue stretch at 24–106 folds into the Lipoyl-binding domain; sequence TYTVGITEHA…YAGGWIFKIK (83 aa). Residue K65 is modified to N6-lipoyllysine.

Belongs to the GcvH family. As to quaternary structure, the glycine cleavage system is composed of four proteins: P, T, L and H. The cofactor is (R)-lipoate.

Functionally, the glycine cleavage system catalyzes the degradation of glycine. The H protein shuttles the methylamine group of glycine from the P protein to the T protein. In Shigella dysenteriae serotype 1 (strain Sd197), this protein is Glycine cleavage system H protein.